A 429-amino-acid chain; its full sequence is Adenylosuccinate synthetase (429 aa).

Residues 12–18 and 40–42 each bind GTP; these read GDEGKGK and GHT. Catalysis depends on D13, which acts as the Proton acceptor. Mg(2+) contacts are provided by D13 and G40. IMP-binding positions include 13–16, 38–41, T128, R142, Q223, T238, and R302; these read DEGK and NAGH. Residue H41 is the Proton donor of the active site. 298 to 304 provides a ligand contact to substrate; that stretch reads TVTGRPR. Residues R304, 330–332, and 412–414 each bind GTP; these read LLD and SVG.

Belongs to the adenylosuccinate synthetase family. As to quaternary structure, homodimer. The cofactor is Mg(2+).

It is found in the cytoplasm. The enzyme catalyses IMP + L-aspartate + GTP = N(6)-(1,2-dicarboxyethyl)-AMP + GDP + phosphate + 2 H(+). It participates in purine metabolism; AMP biosynthesis via de novo pathway; AMP from IMP: step 1/2. In terms of biological role, plays an important role in the de novo pathway of purine nucleotide biosynthesis. Catalyzes the first committed step in the biosynthesis of AMP from IMP. The sequence is that of Adenylosuccinate synthetase from Lactobacillus gasseri (strain ATCC 33323 / DSM 20243 / BCRC 14619 / CIP 102991 / JCM 1131 / KCTC 3163 / NCIMB 11718 / NCTC 13722 / AM63).